We begin with the raw amino-acid sequence, 266 residues long: MTLIENLNSDKTFLENNQYTDEGVKVYEFIFGENYISSGGLEATKKILSDIELNENSKVLDIGSGLGGGCMYINEKYGAHTHGIDICSNIVNMANERVSGNNKIIFEANDILTKEFPENNFDLIYSRDAILHLSLENKNKLFQKCYKWLKPTGTLLITDYCATEKENWDDEFKEYVKQRKYTLITVEEYADILTACNFKNVVSKDLSDYWNQLLEVEHKYLHENKEEFLKLFSEKKFISLDDGWSRKIKDSKRKMQRWGYFKATKN.

Residue glutamine 18 coordinates phosphoethanolamine. Tyrosine 19 is a catalytic residue. Residue tyrosine 27 coordinates phosphoethanolamine. 8 residues coordinate S-adenosyl-L-methionine: isoleucine 36, serine 37, glycine 63, aspartate 85, isoleucine 86, aspartate 110, isoleucine 111, and arginine 127. Residue histidine 132 is part of the active site. Phosphoethanolamine-binding residues include tyrosine 160, tyrosine 175, arginine 179, tyrosine 181, and lysine 247.

Belongs to the class I-like SAM-binding methyltransferase superfamily. PEAMT family. In terms of assembly, monomer.

The protein resides in the golgi apparatus membrane. Its subcellular location is the cytoplasm. It catalyses the reaction phosphoethanolamine + S-adenosyl-L-methionine = N-methylethanolamine phosphate + S-adenosyl-L-homocysteine + H(+). The catalysed reaction is N-methylethanolamine phosphate + S-adenosyl-L-methionine = N,N-dimethylethanolamine phosphate + S-adenosyl-L-homocysteine + H(+). It carries out the reaction N,N-dimethylethanolamine phosphate + S-adenosyl-L-methionine = phosphocholine + S-adenosyl-L-homocysteine + H(+). Its pathway is phospholipid metabolism; phosphatidylcholine biosynthesis; phosphocholine from phosphoethanolamine. With respect to regulation, inhibited by phosphocholine. Inhibited by hexadecylphosphocholine (miltefosine). Inhibited by S-adenosyl-l-homocysteine. Weakly inhibited in vitro by amodiaquine, chloroquine and primaquine. Inhibited by NSC-158011. Functionally, catalyzes N-methylation of phosphoethanolamine, phosphomonomethylethanolamine and phosphodimethylethanolamine, the three methylation steps required to convert phosphoethanolamine to phosphocholine. Has no ethanolamine- or phosphatidylethanolamine-N-methyltransferase activity. Required for gametocyte development, maturation and transmission to mosquitoes and for oocyst formation in the mosquito midgut. This is Phosphoethanolamine N-methyltransferase from Plasmodium falciparum (isolate 3D7).